The primary structure comprises 1235 residues: Serine/threonine-protein kinase TAO2 (1235 aa).

S9 bears the Phosphoserine mark. The Protein kinase domain maps to 28 to 281 (FSDLREIGHG…SEVLLKHRFV (254 aa)). ATP is bound by residues 34 to 42 (IGHGSFGAV) and K57. Staurosporine is bound at residue 106–108 (EYC). The Proton acceptor role is filled by D151. G155 contributes to the staurosporine binding site. Phosphoserine is present on S181. Positions 318–457 (QEAPNGPGAE…PTSTSSSSAR (140 aa)) are disordered. Over residues 350-374 (SSHSVPSMSISASSQSSSVNSLADA) the composition is skewed to low complexity. A compositionally biased stretch (acidic residues) spans 375 to 395 (SDNEEEEEEEEEEEEEEEEEG). Basic and acidic residues predominate over residues 396-411 (PESREMAMMQEGEHTV). S416 carries the post-translational modification Phosphoserine. Coiled coils occupy residues 488 to 523 (SALR…EEHS) and 576 to 603 (KELA…LQEN). S658 carries the phosphoserine modification. Residues 683 to 715 (LRQHEATRELELRQLQAVQRTRAELTRLQHQTE) are a coiled coil. 3 positions are modified to phosphoserine: S777, S825, and S827. The disordered stretch occupies residues 892 to 941 (GPVLTPVPEEEEEEEEEGGAPIGTPRDPGDGCPSPDIPPEPPPSHLRQYP). Residues 899 to 909 (PEEEEEEEEEG) show a composition bias toward acidic residues. Pro residues predominate over residues 926–935 (PDIPPEPPPS). The next 3 membrane-spanning stretches (helical) occupy residues 967–987 (LLPL…GGGL), 989–1009 (AALL…LFLC), and 1014–1034 (LPPS…VLSL). R1038 is modified (phosphoserine). The next 2 helical transmembrane spans lie at 1040 to 1060 (LMGV…SLAL) and 1170 to 1190 (LASC…LLKG). Positions 1210 to 1235 (SASRQLPPGTVAGRRSQTRRALPPWR) are disordered.

It belongs to the protein kinase superfamily. STE Ser/Thr protein kinase family. STE20 subfamily. In terms of assembly, self-associates. Interacts with MAP2K3 and MAP2K6. Interacts with tubulins. Interacts with MAP3K7 and interferes with MAP3K7-binding to CHUK and thus prevents NF-kappa-B activation. Isoform 2 interacts with PCDH8; this complex may also include CDH2. The cofactor is Mg(2+). Post-translationally, autophosphorylated. Phosphorylated by ATM. In terms of processing, phosphorylated on Ser-1038 by MAPK14. This phosphorylation is required PCDH8 for endocytosis.

The protein resides in the cytoplasmic vesicle membrane. It is found in the cytoplasm. Its subcellular location is the cytoskeleton. The protein localises to the cell projection. It localises to the dendrite. It carries out the reaction L-seryl-[protein] + ATP = O-phospho-L-seryl-[protein] + ADP + H(+). It catalyses the reaction L-threonyl-[protein] + ATP = O-phospho-L-threonyl-[protein] + ADP + H(+). With respect to regulation, moderately inhibited by staurosporine, a broad-range protein kinase inhibitor. Its function is as follows. Serine/threonine-protein kinase involved in different processes such as membrane blebbing and apoptotic bodies formation DNA damage response and MAPK14/p38 MAPK stress-activated MAPK cascade. Phosphorylates itself, MBP, activated MAPK8, MAP2K3, MAP2K6 and tubulins. Activates the MAPK14/p38 MAPK signaling pathway through the specific activation and phosphorylation of the upstream MAP2K3 and MAP2K6 kinases. In response to DNA damage, involved in the G2/M transition DNA damage checkpoint by activating the p38/MAPK14 stress-activated MAPK cascade, probably by mediating phosphorylation of upstream MAP2K3 and MAP2K6 kinases. May affect microtubule organization and stability. May play a role in the osmotic stress-MAPK8 pathway. Prevents MAP3K7-mediated activation of CHUK, and thus NF-kappa-B activation. Isoform 2, but not isoform 1, is required for PCDH8 endocytosis. Following homophilic interactions between PCDH8 extracellular domains, isoform 2 phosphorylates and activates MAPK14/p38 MAPK which in turn phosphorylates isoform 2. This process leads to PCDH8 endocytosis and CDH2 cointernalization. Both isoforms are involved in MAPK14/p38 MAPK activation. In Rattus norvegicus (Rat), this protein is Serine/threonine-protein kinase TAO2 (Taok2).